The primary structure comprises 35 residues: Kappa-theraphotoxin-Tb1b (35 aa).

3 disulfide bridges follow: cysteine 3-cysteine 18, cysteine 10-cysteine 23, and cysteine 17-cysteine 30.

Belongs to the neurotoxin 10 (Hwtx-1) family. 58 subfamily. Monomer. Expressed by the venom gland.

The protein resides in the secreted. Its function is as follows. Low-affinity blocker of Kv4.2/KCND2 voltage-gated potassium channels. Is presumed to shift the voltage-dependence of channel activation to more depolarized potentials and to bind to the S3-S4 linker region of the voltage sensor domain. This is Kappa-theraphotoxin-Tb1b from Theraphosa blondi (Goliath birdeating spider).